The following is a 179-amino-acid chain: Small ribosomal subunit protein uS5 (179 aa).

The S5 DRBM domain maps to 13–76; the sequence is LDERVVLINR…EAAKRNLIRV (64 aa). The tract at residues 160 to 179 is disordered; it reads DMTPQELNARRMRRETTEAA.

This sequence belongs to the universal ribosomal protein uS5 family. Part of the 30S ribosomal subunit. Contacts proteins S4 and S8.

Its function is as follows. With S4 and S12 plays an important role in translational accuracy. In terms of biological role, located at the back of the 30S subunit body where it stabilizes the conformation of the head with respect to the body. The sequence is that of Small ribosomal subunit protein uS5 from Chloroflexus aggregans (strain MD-66 / DSM 9485).